The primary structure comprises 197 residues: MENRELTYITNSIAEAQRVMAAMLADERLLATVQKVADACIASIAQGGKVLLAGNGGSAADAQHIAGEFVSRFAFDRPGLPAVALTTDTSILTAIGNDYGYEKLFSRQVQALGNKGDVLIGYSTSGKSPNILAAFREAKAKGMTCVGFTGNRGGEMRELCDLLLEVPSADTPKIQEGHLVLGHIVCGLVEHSIFGKQ.

Residues 40–197 (CIASIAQGGK…LVEHSIFGKQ (158 aa)) enclose the SIS domain. Residue 55–57 (NGG) participates in substrate binding. Residues histidine 64 and glutamate 68 each contribute to the Zn(2+) site. Substrate contacts are provided by residues glutamate 68, 97 to 98 (ND), 123 to 125 (STS), serine 128, and glutamine 175. 2 residues coordinate Zn(2+): glutamine 175 and histidine 183.

It belongs to the SIS family. GmhA subfamily. In terms of assembly, homotetramer. It depends on Zn(2+) as a cofactor.

It is found in the cytoplasm. It catalyses the reaction 2 D-sedoheptulose 7-phosphate = D-glycero-alpha-D-manno-heptose 7-phosphate + D-glycero-beta-D-manno-heptose 7-phosphate. Its pathway is carbohydrate biosynthesis; D-glycero-D-manno-heptose 7-phosphate biosynthesis; D-glycero-alpha-D-manno-heptose 7-phosphate and D-glycero-beta-D-manno-heptose 7-phosphate from sedoheptulose 7-phosphate: step 1/1. The protein operates within capsule biogenesis; capsule polysaccharide biosynthesis. Functionally, catalyzes the isomerization of sedoheptulose 7-phosphate in D-glycero-D-manno-heptose 7-phosphate. The polypeptide is Phosphoheptose isomerase (Burkholderia mallei (strain ATCC 23344)).